The following is a 555-amino-acid chain: Alpha-copaene synthase (555 aa).

Residues aspartate 312, aspartate 316, aspartate 452, serine 456, and glutamate 460 each contribute to the Mg(2+) site. The DDXXD motif motif lies at 312–316 (DDTYD).

It belongs to the terpene synthase family. Mg(2+) is required as a cofactor. Mainly expressed in sunflower trichomes.

It carries out the reaction (2E,6E)-farnesyl diphosphate = alpha-copaene + diphosphate. The enzyme catalyses (2E,6E)-farnesyl diphosphate = alpha-muurolene + diphosphate. The catalysed reaction is (2E,6E)-farnesyl diphosphate = alpha-humulene + diphosphate. Its pathway is secondary metabolite biosynthesis; terpenoid biosynthesis. Functionally, involved in the biosynthesis of germacrene-derived sesquiterpene lactones. Catalyzes the cyclization of farnesyl diphosphate to alpha-copaene, delta-cadinene, alpha-muurolene, beta-caryophyllene and alpha-humulene. In Helianthus annuus (Common sunflower), this protein is Alpha-copaene synthase (CS).